The primary structure comprises 415 residues: Putative FNIP repeat-containing protein L415 (415 aa).

The stretch at 148–185 is one FNIP repeat; the sequence is FIKKGAIPDSVTHLYFGSDYLSKDIIPKNVVYLRFGDF.

This Acanthamoeba polyphaga mimivirus (APMV) protein is Putative FNIP repeat-containing protein L415.